Reading from the N-terminus, the 501-residue chain is Aspartyl/glutamyl-tRNA(Asn/Gln) amidotransferase subunit B (501 aa).

The tract at residues 272-291 is disordered; it reads QETRHYQETDGTTSKGRPKE.

This sequence belongs to the GatB/GatE family. GatB subfamily. In terms of assembly, heterotrimer of A, B and C subunits.

It carries out the reaction L-glutamyl-tRNA(Gln) + L-glutamine + ATP + H2O = L-glutaminyl-tRNA(Gln) + L-glutamate + ADP + phosphate + H(+). The catalysed reaction is L-aspartyl-tRNA(Asn) + L-glutamine + ATP + H2O = L-asparaginyl-tRNA(Asn) + L-glutamate + ADP + phosphate + 2 H(+). Functionally, allows the formation of correctly charged Asn-tRNA(Asn) or Gln-tRNA(Gln) through the transamidation of misacylated Asp-tRNA(Asn) or Glu-tRNA(Gln) in organisms which lack either or both of asparaginyl-tRNA or glutaminyl-tRNA synthetases. The reaction takes place in the presence of glutamine and ATP through an activated phospho-Asp-tRNA(Asn) or phospho-Glu-tRNA(Gln). The chain is Aspartyl/glutamyl-tRNA(Asn/Gln) amidotransferase subunit B from Corynebacterium efficiens (strain DSM 44549 / YS-314 / AJ 12310 / JCM 11189 / NBRC 100395).